We begin with the raw amino-acid sequence, 208 residues long: Large ribosomal subunit protein uL4 (208 aa).

Residues 42 to 77 (SMRQGTHKTKTKTEVSGGGRKPWRQKGTGRARQGSI) form a disordered region.

The protein belongs to the universal ribosomal protein uL4 family. In terms of assembly, part of the 50S ribosomal subunit.

In terms of biological role, one of the primary rRNA binding proteins, this protein initially binds near the 5'-end of the 23S rRNA. It is important during the early stages of 50S assembly. It makes multiple contacts with different domains of the 23S rRNA in the assembled 50S subunit and ribosome. Functionally, forms part of the polypeptide exit tunnel. This is Large ribosomal subunit protein uL4 from Spiroplasma kunkelii.